We begin with the raw amino-acid sequence, 522 residues long: MQPWHGKAMQRASEAGATAPKASARNARGAPMDPTESPAAPEAALPKAGKFGPARKSGSRQKKSAPDTQERPPVRATGARAKKAPQRAQDTQPSDATSAPGAEGLEPPAAREPALSRAGSCRQRGARCSTKPRPPPGPWDVPSPGLPVSAPILVRRDAAPGASKLRAVLEKLKLSRDDISTAAGMVKGVVDHLLLRLKCDSAFRGVGLLNTGSYYEHVKISAPNEFDVMFKLEVPRIQLEEYSNTRAYYFVKFKRNPKENPLSQFLEGEILSASKMLSKFRKIIKEEINDIKDTDVIMKRKRGGSPAVTLLISEKISVDITLALESKSSWPASTQEGLRIQNWLSAKVRKQLRLKPFYLVPKHAKEGNGFQEETWRLSFSHIEKEILNNHGKSKTCCENKEEKCCRKDCLKLMKYLLEQLKERFKDKKHLDKFSSYHVKTAFFHVCTQNPQDSQWDRKDLGLCFDNCVTYFLQCLRTEKLENYFIPEFNLFSSNLIDKRSKEFLTKQIEYERNNEFPVFDEF.

The disordered stretch occupies residues 1–144 (MQPWHGKAMQ…PPGPWDVPSP (144 aa)). DNA-binding stretches follow at residues 1-160 (MQPW…DAAP) and 173-215 (KLSR…GSYY). Lys-7 carries the N6-acetyllysine modification. Ser-13 carries the phosphoserine modification. Position 21 is an N6-acetyllysine (Lys-21). Phosphoserine is present on Ser-37. 5 positions are modified to N6-acetyllysine: Lys-47, Lys-50, Lys-56, Lys-62, and Lys-63. Phosphoserine is present on Ser-64. Residues 64-73 (SAPDTQERPP) show a composition bias toward basic and acidic residues. Residues 64–75 (SAPDTQERPPVR) are required for association with the cell membrane. Thr-68 is subject to Phosphothreonine. 2 positions are modified to N6-acetyllysine: Lys-82 and Lys-83. Positions 88 to 97 (AQDTQPSDAT) are enriched in polar residues. Phosphothreonine is present on Thr-91. Ser-98, Ser-116, and Ser-129 each carry phosphoserine. A compositionally biased stretch (low complexity) spans 98 to 118 (SAPGAEGLEPPAAREPALSRA). A required for activation upon DNA viral infection region spans residues 120 to 160 (SCRQRGARCSTKPRPPPGPWDVPSPGLPVSAPILVRRDAAP). At Lys-131 the chain carries N6-lactoyllysine. Positions 132–144 (PRPPPGPWDVPSP) are enriched in pro residues. Ser-143 carries the post-translational modification Phosphoserine. The Nuclear export signal signature appears at 169–174 (LEKLKL). Residue Lys-173 forms a Glycyl lysine isopeptide (Lys-Gly) (interchain with G-Cter in ubiquitin) linkage. Residue Asp-191 is modified to PolyADP-ribosyl aspartic acid. Asn-210 is modified ((Microbial infection) Deamidated asparagine; by herpes simplex virus 1/HHV-1 UL37). Thr-211 contacts GTP. The residue at position 213 (Ser-213) is a Phosphoserine. Ser-213 contacts ATP. The residue at position 215 (Tyr-215) is a Phosphotyrosine; by BLK. The Mg(2+) site is built by Glu-225 and Asp-227. Residue 225–227 (EFD) coordinates ATP. Asp-227 is a binding site for 2',3'-cGAMP. Residue Lys-231 forms a Glycyl lysine isopeptide (Lys-Gly) (interchain with G-Cter in SUMO) linkage. Lys-285 participates in a covalent cross-link: Glycyl lysine isopeptide (Lys-Gly) (interchain with G-Cter in ubiquitin). The residue at position 286 (Glu-286) is a 5-glutamyl polyglutamate. The Nuclear localization signal signature appears at 295-305 (DVIMKRKRGGS). Residues 299 to 302 (KRKR) carry the KRKR-loop motif. A Phosphoserine; by CDK1 and PKB modification is found at Ser-305. The residue at position 314 (Glu-314) is a 5-glutamyl glutamate. Residue Asp-319 coordinates GTP. A Mg(2+)-binding site is contributed by Asp-319. 2',3'-cGAMP is bound at residue Asp-319. The interaction with collided ribosomes stretch occupies residues 341-382 (QNWLSAKVRKQLRLKPFYLVPKHAKEGNGFQEETWRLSFSHI). Lys-347 is covalently cross-linked (Glycyl lysine isopeptide (Lys-Gly) (interchain with G-Cter in SUMO); alternate). Residue Lys-347 forms a Glycyl lysine isopeptide (Lys-Gly) (interchain with G-Cter in ubiquitin); alternate linkage. The 2',3'-cGAMP site is built by Lys-362 and Arg-376. 376–383 (RLSFSHIE) contacts GTP. 380–383 (SHIE) contacts ATP. N6-acetyllysine is present on Lys-384. Residue Lys-384 forms a Glycyl lysine isopeptide (Lys-Gly) (interchain with G-Cter in SUMO); alternate linkage. Lys-384 participates in a covalent cross-link: Glycyl lysine isopeptide (Lys-Gly) (interchain with G-Cter in ubiquitin); alternate. Positions 384–407 (KEILNNHGKSKTCCENKEEKCCRK) are DNA-binding. Residue Asn-389 is modified to (Microbial infection) Deamidated asparagine; by herpes simplex virus 1/HHV-1 UL37. His-390 serves as a coordination point for Zn(2+). Lys-392 and Lys-394 each carry N6-acetyllysine. A Glycyl lysine isopeptide (Lys-Gly) (interchain with G-Cter in SUMO) cross-link involves residue Lys-394. 3 residues coordinate Zn(2+): Cys-396, Cys-397, and Cys-404. 2 S-palmitoyl cysteine lipidation sites follow: Cys-404 and Cys-405. Glycyl lysine isopeptide (Lys-Gly) (interchain with G-Cter in ubiquitin) cross-links involve residues Lys-411, Lys-414, Lys-427, and Lys-428. Lys-414 bears the N6-acetyllysine mark. Lys-414 serves as a coordination point for ATP. The short motif at 427-429 (KKH) is the KKH-loop element. A phosphoserine mark is found at Ser-434 and Ser-435. 435–439 (SYHVK) provides a ligand contact to ATP. (Microbial infection) Deamidated glutamine; by herpes simplex virus 1/HHV-1 UL37 is present on residues Gln-451 and Gln-454. Cys-474 is lipidated: S-palmitoyl cysteine. A Glycyl lysine isopeptide (Lys-Gly) (interchain with G-Cter in SUMO); alternate cross-link involves residue Lys-479. Lys-479 is covalently cross-linked (Glycyl lysine isopeptide (Lys-Gly) (interchain with G-Cter in ubiquitin); alternate). The residue at position 506 (Lys-506) is an N6-methyllysine.

This sequence belongs to the mab-21 family. Monomer in the absence of DNA. Homodimer in presence of dsDNA: forms a 2:2 dimer with two enzymes binding to two DNA molecules. Interacts with nucleosomes; interaction is mainly mediated via histones H2A and H2B and inactivates the nucleotidyltransferase activity by blocking DNA-binding and subsequent activation. Interacts with PQBP1 (via WW domain). Interacts with TRIM14; this interaction recruits USP14, leading to deubiquitinate and stabilize CGAS and promote type I interferon production. Interacts with ZCCHC3; promoting sensing of dsDNA by CGAS. Interacts (when not monomethylated) with (poly-ADP-ribosylated) PARP1; interaction takes place in the nucleus and prevents the formation of the PARP1-TIMELESS complex. Interacts (when monomethylated) with SGF29; interaction with SGF29 prevents interaction with PARP1. Interacts with PCBP2; preventing the formation of liquid-like droplets in which CGAS is activated. Interacts with IRGM; promoting CGAS degradation. Interacts with DDX41. As to quaternary structure, (Microbial infection) Interacts with herpes virus 8/HHV-8 protein ORF52; this interaction inhibits cGAS enzymatic activity by preventing the formation of liquid-like droplets by CGAS. In terms of assembly, (Microbial infection) Interacts with herpes simplex virus 1 protein UL37; this interaction deaminates CGAS and inhibits its activation. (Microbial infection) Interacts with vaccinia virus protein OPG067; this interaction promotes CGAS proteasomal degradation. As to quaternary structure, (Microbial infection) Interacts with cytomegalovirus protein UL31; this interaction promotes dissociation of DNA from CGAS, thereby inhibiting the enzymatic activity of CGAS. In terms of assembly, (Microbial infection) Interacts with herpes simplex virus 1 tegument protein VP22 (UL49); this interaction inhibits cGAS enzymatic activity by preventing the formation of liquid-like droplets by CGAS. (Microbial infection) Interacts with herpesvirus 3 tegument protein VP22 (ORF9); this interaction inhibits cGAS enzymatic activity by preventing the formation of liquid-like droplets by CGAS. As to quaternary structure, (Microbial infection) Interacts with human cytomegalovirus proteins UL42 and UL83; these interactions result in the inhibition of cGAS-STING signaling. It depends on Mg(2+) as a cofactor. The cofactor is Mn(2+). Zn(2+) serves as cofactor. In terms of processing, the N-terminal disordered part (1-160) is phosphorylated by AURKB during the G2-M transition, blocking CGAS liquid phase separation and preventing activation. Phosphorylation at Tyr-215 by BLK promotes cytosolic retention. Localizes into the nucleus following dephosphorylation at Tyr-215. Phosphorylation at Ser-435 activates the nucleotidyltransferase activity. Dephosphorylation at Ser-435 by PPP6C impairs its ability to bind GTP, thereby inactivating it. Phosphorylation at Thr-68 and Ser-213 by PRKDC inhibits its cyclic GMP-AMP synthase activity by impairing homodimerization and activation. Phosphorylation at Ser-305 by AKT (AKT1, AKT2 or AKT3) suppresses the nucleotidyltransferase activity. Phosphorylation at Ser-305 by CDK1 during mitosis leads to its inhibition, thereby preventing CGAS activation by self-DNA during mitosis. Dephosphorylated at Ser-305 by protein phosphatase PP1 upon mitotic exit. Post-translationally, ubiquitinated at Lys-414 via 'Lys-48'-linked polyubiquitin chains, leading to its SQSTM1-mediated autophagic degradation. Interaction with TRIM14 promotes recruitment of USP14, leading to deubiquitinate Lys-414 and stabilize CGAS. Ubiquitinated at Lys-173 and Lys-384 by RNF185 via 'Lys-27'-linked polyubiquitination, promoting CGAS cyclic GMP-AMP synthase activity. Monoubiquitination at Lys-347 by TRIM56 promotes oligomerization and subsequent activation. Monoubiquitination by TRIM41 promotes CGAS activation. Ubiquitination at Lys-285 and Lys-479 via 'Lys-48'-linked polyubiquitination promotes its degradation. Deubiquitination at Lys-285 by USP29 promotes its stabilization. Deubiquitinated by USP27X, promoting its stabilization. Ubiquitinated at Lys-411 via 'Lys-63'-linked polyubiquitin chains by MARCHF8, leading to the inhibition of its DNA binding ability. In cycling cells, nucleosome-bound CGAS is ubiquitinated at Lys-427 and Lys-428 via 'Lys-48'-linked polyubiquitin chains by the ECS(SPSB3) complex, leading to its degradation: ubiquitination and degradation of nuclear CGAS during G1 and G2 phases is required to promote low intranuclear CGAS abundance before the next mitotic cycle. Sumoylated at Lys-231 and Lys-479 by TRIM38 in uninfected cells and during the early phase of viral infection, promoting its stability by preventing ubiquitination at Lys-285 and Lys-479, and subsequent degradation. Desumoylated by SENP2 during the late phase of viral infection. Sumoylation at Lys-347, Lys-384 and Lys-394 prevents DNA-binding, oligomerization and nucleotidyltransferase activity. Desumoylation at Lys-347, Lys-384 and Lys-394 by SENP7 relieves inhibition and activates CGAS. In terms of processing, polyglutamylated by TTLL6 at Glu-286, leading to impair DNA-binding activity. Monoglutamylated at Glu-314 by TTLL4, leading to impair the nucleotidyltransferase activity. Deglutamylated by AGBL5/CCP5 and AGBL6/CCP6. Post-translationally, acetylation at Lys-384, Lys-394 and Lys-414 inhibits the cyclic GMP-AMP synthase activity. Deacetylated upon cytosolic DNA challenge such as viral infections. Acetylation can be mediated by aspirin (acetylsalicylate) drug, which directly acetylates CGAS. Acetylation by aspirin efficiently inhibits CGAS-mediated immune responses and is able to suppress self-DNA-induced autoimmunity. Acetylation at Lys-47, Lys-56, Lys-62 and Lys-83 by KAT5 increases the cyclic GMP-AMP synthase activity by promoting DNA-binding and subsequent activation. Proteolytically cleaved by apoptotic caspases during apoptosis, leading to its inactivation. The damage of the nucleus and the mitochondria during apoptosis leads to leakage of nuclear and mitochondrial DNA, which activate CGAS: cleavage and inactivation during apoptosis in required to prevent cytokine overproduction. Cleaved by CASP3 at Asp-319 during virus-induced apoptosis, thereby inactivating it and preventing cytokine overproduction. Cleaved by CASP1 at Asp-140 and Asp-157 upon DNA virus infection; the cleavage impairs cGAMP production. Also cleaved by the pyroptotic CASP4 and CASP5 during non-canonical inflammasome activation; they don't cut at the same sites than CASP1. In terms of processing, degraded via selective autophagy following interaction with IRGM. IRGM promotes CGAS recruitment to autophagosome membranes, promoting its SQSTM1/p62-dependent autophagic degradation. Post-translationally, poly-ADP-ribosylation at Asp-191 by PARP1 impairs DNA-binding, thereby preventing the cyclic GMP-AMP synthase activity. Palmitoylation at Cys-474 by ZDHHC18 impairs DNA-binding, thereby preventing the cyclic GMP-AMP synthase activity. Palmitoylation at Cys-404 and Cys-405 by ZDHHC9 promotes homodimerization and cyclic GMP-AMP synthase activity. Depalmitoylation at Cys-404 and Cys-405 by LYPLAL1 impairs homodimerization and cyclic GMP-AMP synthase activity. In terms of processing, monomethylated at Lys-506 by SETD7. Monomethylation promotes interaction with SGF29, preventing interaction between PARP1 nad SGF29. Demethylation by RIOX1 promotes interaction with PARP1, followed by PARP1 inactivation. Post-translationally, lactylation by AARS2 prevents ability to undergo liquid-liquid phase separation (LLPS), thereby inhibiting CGAS activation. (Microbial infection) Deamidated on 'Asn-210' by herpes simplex virus 1 protein UL37. This modification significantly reduces CGAS-dependent cGAMP production and innate immune signaling induced by dsDNA. In terms of processing, (Microbial infection) Degraded by an autophagy-mediated mechanism in presence of Chikungunya virus capsid protein. Expressed in the monocytic cell line THP1.

It localises to the nucleus. The protein resides in the chromosome. It is found in the cell membrane. Its subcellular location is the cytoplasm. The protein localises to the cytosol. It catalyses the reaction GTP + ATP = 2',3'-cGAMP + 2 diphosphate. The catalysed reaction is GTP + ATP = pppGp(2'-5')A + diphosphate. The enzyme catalyses pppGp(2'-5')A = 2',3'-cGAMP + diphosphate. With respect to regulation, the enzyme activity is strongly increased by double-stranded DNA (dsDNA), but not by single-stranded DNA or RNA. DNA-binding induces the formation of liquid-like droplets in which CGAS is activated. Liquid-like droplets also create a selective environment that restricts entry of negative regulators, such as TREX1 or BANF1/BAF, allowing sensing of DNA. A number of mechanisms exist to restrict its activity toward self-DNA. The nucleotidyltransferase activity is inhibited in the nucleus via its association with nucleosomes: interacts with the acidic patch of histones H2A and H2B, thereby blocking DNA-binding and subsequent activation. CGAS is also inactive when associated with mitotic chromatin. Chromatin-bound CGAS cannot be activated by exogenous DNA in mitotic cells: phosphorylation of the N-terminal disordered part by AURKB during the G2-M transition blocks CGAS liquid phase separation and activation. Activity toward self-DNA is inhibited by BANF1/BAF upon acute loss of nuclear membrane integrity: BANF1/BAF acts by outcompeting CGAS for DNA-binding, thereby preventing CGAS activation. DNA-induced activation at micronuclei is also limited by TREX1, which degrades micronuclear DNA upon nuclear envelope rupture, thereby preventing CGAS activation. CGAS can be released from nucleosomes and activated by MRE11 component of the MRN complex, which displaces CGAS from acidic-patch-mediated sequestration. Acetylation at Lys-384, Lys-394 and Lys-414 inhibits the cyclic GMP-AMP synthase activity. Inhibited by aspirin (acetylsalicylate) drug, which acetylates CGAS. Acetylation by KAT5 increases the cyclic GMP-AMP synthase activity by promoting DNA-binding and subsequent activation. Phosphorylation at Ser-305 suppresses the nucleotidyltransferase activity. Phosphorylation at Ser-435 promotes the cyclic GMP-AMP synthase activity. Phosphorylation at Thr-68 and Ser-213 inhibits its cyclic GMP-AMP synthase activity. Ubiquitination at Lys-173 and Lys-384 via 'Lys-27'-linked polyubiquitination enhances the cyclic GMP-AMP synthase activity. Monoubiquitination at Lys-347 promotes oligomerization and subsequent activation. Sumoylation at Lys-347, Lys-384 and Lys-394 prevents DNA-binding, oligomerization and nucleotidyltransferase activity. The enzyme activity is impaired by the cleavage at Asp-140 and Asp-157 produced by CASP1. In addition to DNA, also activated by collided ribosomes upon translation stress: specifically binds collided ribosomes, promoting its activation and triggering type-I interferon production. Strongly inhibited by compound PF-06928215, which is specific for human protein. Inhibited by small-molecule inhibitors with a pyridoindole tricyclic core G108, G140 and G150. Its activity is regulated as follows. (Microbial infection) Nucleotidyltransferase activity is inhibited by different herpesvirus tegument proteins (Herpes simplex virus 1 tegument protein VP22, herpes virus 8 protein ORF52 and herpesvirus 3 tegument protein VP22/ORF9). Viral tegument proteins act by disrupting liquid-like droplets in which CGAS is activated, thereby preventing CGAS activity. In terms of biological role, nucleotidyltransferase that catalyzes the formation of cyclic GMP-AMP (2',3'-cGAMP) from ATP and GTP and plays a key role in innate immunity. Catalysis involves both the formation of a 2',5' phosphodiester linkage at the GpA step and the formation of a 3',5' phosphodiester linkage at the ApG step, producing c[G(2',5')pA(3',5')p]. Acts as a key DNA sensor: directly binds double-stranded DNA (dsDNA), inducing the formation of liquid-like droplets in which CGAS is activated, leading to synthesis of 2',3'-cGAMP, a second messenger that binds to and activates STING1, thereby triggering type-I interferon production. Preferentially recognizes and binds curved long dsDNAs of a minimal length of 40 bp. Acts as a key foreign DNA sensor, the presence of double-stranded DNA (dsDNA) in the cytoplasm being a danger signal that triggers the immune responses. Has antiviral activity by sensing the presence of dsDNA from DNA viruses in the cytoplasm. Also acts as an innate immune sensor of infection by retroviruses, such as HIV-2, by detecting the presence of reverse-transcribed DNA in the cytosol. In contrast, HIV-1 is poorly sensed by CGAS, due to its capsid that cloaks viral DNA from CGAS detection. Detection of retroviral reverse-transcribed DNA in the cytosol may be indirect and be mediated via interaction with PQBP1, which directly binds reverse-transcribed retroviral DNA. Also detects the presence of DNA from bacteria, such as M.tuberculosis. 2',3'-cGAMP can be transferred from producing cells to neighboring cells through gap junctions, leading to promote STING1 activation and convey immune response to connecting cells. 2',3'-cGAMP can also be transferred between cells by virtue of packaging within viral particles contributing to IFN-induction in newly infected cells in a cGAS-independent but STING1-dependent manner. Also senses the presence of neutrophil extracellular traps (NETs) that are translocated to the cytosol following phagocytosis, leading to synthesis of 2',3'-cGAMP. In addition to foreign DNA, can also be activated by endogenous nuclear or mitochondrial DNA. When self-DNA leaks into the cytosol during cellular stress (such as mitochondrial stress, SARS-CoV-2 infection causing severe COVID-19 disease, DNA damage, mitotic arrest or senescence), or is present in form of cytosolic micronuclei, CGAS is activated leading to a state of sterile inflammation. Acts as a regulator of cellular senescence by binding to cytosolic chromatin fragments that are present in senescent cells, leading to trigger type-I interferon production via STING1 and promote cellular senescence. Also involved in the inflammatory response to genome instability and double-stranded DNA breaks: acts by localizing to micronuclei arising from genome instability. Micronuclei, which are frequently found in cancer cells, consist of chromatin surrounded by their own nuclear membrane: following breakdown of the micronuclear envelope, a process associated with chromothripsis, CGAS binds self-DNA exposed to the cytosol, leading to 2',3'-cGAMP synthesis and subsequent activation of STING1 and type-I interferon production. Activated in response to prolonged mitotic arrest, promoting mitotic cell death. In a healthy cell, CGAS is however kept inactive even in cellular events that directly expose it to self-DNA, such as mitosis, when cGAS associates with chromatin directly after nuclear envelope breakdown or remains in the form of postmitotic persistent nuclear cGAS pools bound to chromatin. Nuclear CGAS is inactivated by chromatin via direct interaction with nucleosomes, which block CGAS from DNA binding and thus prevent CGAS-induced autoimmunity. Also acts as a suppressor of DNA repair in response to DNA damage: inhibits homologous recombination repair by interacting with PARP1, the CGAS-PARP1 interaction leading to impede the formation of the PARP1-TIMELESS complex. In addition to DNA, also sense translation stress: in response to translation stress, translocates to the cytosol and associates with collided ribosomes, promoting its activation and triggering type-I interferon production. In contrast to other mammals, human CGAS displays species-specific mechanisms of DNA recognition and produces less 2',3'-cGAMP, allowing a more fine-tuned response to pathogens. The polypeptide is Cyclic GMP-AMP synthase (Homo sapiens (Human)).